We begin with the raw amino-acid sequence, 282 residues long: Acetyl-coenzyme A carboxylase carboxyl transferase subunit beta (282 aa).

The region spanning 29–282 (LMQRCPNCGL…LLKYGGMQDD (254 aa)) is the CoA carboxyltransferase N-terminal domain. Zn(2+)-binding residues include Cys33, Cys36, Cys51, and Cys54. The segment at 33 to 54 (CPNCGLEFFARRLDKYKTCPDC) adopts a C4-type zinc-finger fold.

The protein belongs to the AccD/PCCB family. As to quaternary structure, acetyl-CoA carboxylase is a heterohexamer composed of biotin carboxyl carrier protein (AccB), biotin carboxylase (AccC) and two subunits each of ACCase subunit alpha (AccA) and ACCase subunit beta (AccD). The cofactor is Zn(2+).

It is found in the cytoplasm. The catalysed reaction is N(6)-carboxybiotinyl-L-lysyl-[protein] + acetyl-CoA = N(6)-biotinyl-L-lysyl-[protein] + malonyl-CoA. The protein operates within lipid metabolism; malonyl-CoA biosynthesis; malonyl-CoA from acetyl-CoA: step 1/1. Its function is as follows. Component of the acetyl coenzyme A carboxylase (ACC) complex. Biotin carboxylase (BC) catalyzes the carboxylation of biotin on its carrier protein (BCCP) and then the CO(2) group is transferred by the transcarboxylase to acetyl-CoA to form malonyl-CoA. This Lactobacillus delbrueckii subsp. bulgaricus (strain ATCC BAA-365 / Lb-18) protein is Acetyl-coenzyme A carboxylase carboxyl transferase subunit beta.